The following is a 217-amino-acid chain: Probable rhamnogalacturonan acetylesterase YesY (217 aa).

Ser11 (nucleophile) is an active-site residue. Residues Glu178 and His185 contribute to the active site.

The protein belongs to the 'GDSL' lipolytic enzyme family.

May play a role in the degradation of rhamnogalacturonan derived from plant cell walls. Probably has broad substrate specificity and may degrade several types of acetylated substrates. This chain is Probable rhamnogalacturonan acetylesterase YesY (yesY), found in Bacillus subtilis (strain 168).